A 374-amino-acid chain; its full sequence is Guanine nucleotide-binding protein subunit alpha-15 (374 aa).

The region spanning 41 to 374 (GELKLLLLGP…ARYLDEINLL (334 aa)) is the G-alpha domain. The segment at 44–57 (KLLLLGPGESGKST) is G1 motif. GTP is bound by residues 49 to 56 (GPGESGKS), 183 to 189 (LRSRMPT), 208 to 212 (DVGGQ), 277 to 280 (NKTD), and A346. Residue S56 participates in Mg(2+) binding. The tract at residues 181 to 189 (DVLRSRMPT) is G2 motif. Residue R186 is modified to ADP-ribosylarginine; by cholera toxin. T189 is a binding site for Mg(2+). The G3 motif stretch occupies residues 204–213 (LRIVDVGGQK). The tract at residues 273 to 280 (ILFLNKTD) is G4 motif. Positions 344–349 (TCATDT) are G5 motif.

This sequence belongs to the G-alpha family. G(q) subfamily. As to quaternary structure, g proteins are composed of 3 units; alpha, beta and gamma. The alpha chain contains the guanine nucleotide binding site. Specifically expressed in hematopoietic cells. Expressed in epididymis (at protein level).

In terms of biological role, guanine nucleotide-binding proteins (G proteins) are involved as modulators or transducers in various transmembrane signaling systems. This Homo sapiens (Human) protein is Guanine nucleotide-binding protein subunit alpha-15 (GNA15).